Reading from the N-terminus, the 70-residue chain is Small ribosomal subunit protein bS21B (70 aa).

The segment at 37–70 (SYEKPTTERKRKKAAAVARLRKQVRRSMPPKKKY) is disordered. Residues 45-70 (RKRKKAAAVARLRKQVRRSMPPKKKY) show a composition bias toward basic residues.

Belongs to the bacterial ribosomal protein bS21 family.

This is Small ribosomal subunit protein bS21B from Burkholderia pseudomallei (strain K96243).